The following is a 151-amino-acid chain: Ribosome maturation factor RimP (151 aa).

This sequence belongs to the RimP family.

It is found in the cytoplasm. Its function is as follows. Required for maturation of 30S ribosomal subunits. The sequence is that of Ribosome maturation factor RimP from Aliivibrio fischeri (strain MJ11) (Vibrio fischeri).